The sequence spans 431 residues: Histidinol dehydrogenase (431 aa).

Residues Y130, Q191, and N214 each coordinate NAD(+). The substrate site is built by S237, Q261, and H264. 2 residues coordinate Zn(2+): Q261 and H264. Catalysis depends on proton acceptor residues E329 and H330. H330, D363, E417, and H422 together coordinate substrate. D363 provides a ligand contact to Zn(2+). H422 lines the Zn(2+) pocket.

Belongs to the histidinol dehydrogenase family. The cofactor is Zn(2+).

The enzyme catalyses L-histidinol + 2 NAD(+) + H2O = L-histidine + 2 NADH + 3 H(+). The protein operates within amino-acid biosynthesis; L-histidine biosynthesis; L-histidine from 5-phospho-alpha-D-ribose 1-diphosphate: step 9/9. In terms of biological role, catalyzes the sequential NAD-dependent oxidations of L-histidinol to L-histidinaldehyde and then to L-histidine. This chain is Histidinol dehydrogenase, found in Psychrobacter arcticus (strain DSM 17307 / VKM B-2377 / 273-4).